The chain runs to 1103 residues: Isoleucine--tRNA ligase (1103 aa).

The disordered stretch occupies residues 1 to 25 (MSENVYPKANEGGETAHVAPNPSFP). Residues 65–75 (PFANGLPHYGH) carry the 'HIGH' region motif. Residues 649-653 (KMSKH) carry the 'KMSKS' region motif. Lys-652 provides a ligand contact to ATP.

Belongs to the class-I aminoacyl-tRNA synthetase family. IleS type 2 subfamily. In terms of assembly, monomer. It depends on Zn(2+) as a cofactor.

The protein resides in the cytoplasm. It carries out the reaction tRNA(Ile) + L-isoleucine + ATP = L-isoleucyl-tRNA(Ile) + AMP + diphosphate. In terms of biological role, catalyzes the attachment of isoleucine to tRNA(Ile). As IleRS can inadvertently accommodate and process structurally similar amino acids such as valine, to avoid such errors it has two additional distinct tRNA(Ile)-dependent editing activities. One activity is designated as 'pretransfer' editing and involves the hydrolysis of activated Val-AMP. The other activity is designated 'posttransfer' editing and involves deacylation of mischarged Val-tRNA(Ile). The protein is Isoleucine--tRNA ligase of Bifidobacterium longum (strain NCC 2705).